Here is a 434-residue protein sequence, read N- to C-terminus: UDP-N-acetylglucosamine 1-carboxyvinyltransferase (434 aa).

22–23 provides a ligand contact to phosphoenolpyruvate; the sequence is KN. Position 99 (arginine 99) interacts with UDP-N-acetyl-alpha-D-glucosamine. Residue cysteine 123 is the Proton donor of the active site. 2-(S-cysteinyl)pyruvic acid O-phosphothioketal is present on cysteine 123. UDP-N-acetyl-alpha-D-glucosamine is bound by residues 128-132, aspartate 317, and isoleucine 339; that span reads RPVDQ.

Belongs to the EPSP synthase family. MurA subfamily.

The protein localises to the cytoplasm. It catalyses the reaction phosphoenolpyruvate + UDP-N-acetyl-alpha-D-glucosamine = UDP-N-acetyl-3-O-(1-carboxyvinyl)-alpha-D-glucosamine + phosphate. Its pathway is cell wall biogenesis; peptidoglycan biosynthesis. In terms of biological role, cell wall formation. Adds enolpyruvyl to UDP-N-acetylglucosamine. The protein is UDP-N-acetylglucosamine 1-carboxyvinyltransferase of Paracidovorax citrulli (strain AAC00-1) (Acidovorax citrulli).